Here is a 398-residue protein sequence, read N- to C-terminus: Phosphoglycerate kinase (398 aa).

Substrate is bound by residues 21 to 23, arginine 41, 64 to 67, arginine 123, and arginine 156; these read DFN and HLGR. ATP contacts are provided by residues lysine 207, glycine 294, glutamate 325, and 354-357; that span reads GGDS.

This sequence belongs to the phosphoglycerate kinase family. As to quaternary structure, monomer.

It is found in the cytoplasm. It carries out the reaction (2R)-3-phosphoglycerate + ATP = (2R)-3-phospho-glyceroyl phosphate + ADP. It functions in the pathway carbohydrate degradation; glycolysis; pyruvate from D-glyceraldehyde 3-phosphate: step 2/5. In Salinibacter ruber (strain DSM 13855 / M31), this protein is Phosphoglycerate kinase.